A 154-amino-acid chain; its full sequence is MAARLCCQLDPARDVLCLRPVSAESCGRSVSGSLGDLSSPSPSAVPADHGAHLSLRGLPVCAFSSAGPCALRFTSARRMETTVNAHQILPKVLHKRTLGLSAMSTTDLEAYFKACLFKDWEELGEEIRLKIFVLGGCRHKLVCAPAPCNFFTSA.

Positions 68–117 are mitochondrial targeting sequence; it reads PCALRFTSARRMETTVNAHQILPKVLHKRTLGLSAMSTTDLEAYFKACLF.

It belongs to the orthohepadnavirus protein X family. As to quaternary structure, may form homodimer. May interact with host CEBPA, CFLAR, CREB1, DDB1, E4F1, HBXIP, HSPD1/HSP60, NFKBIA, POLR2E and SMAD4. Interacts with host SMC5-SMC6 complex and induces its degradation. Interacts with host TRPC4AP; leading to prevent ubiquitination of TRPC4AP. Interacts with host PLSCR1; this interaction promotes ubiquitination and degradation of HBx and impairs HBx-mediated cell proliferation. In terms of processing, a fraction may be phosphorylated in insect cells and HepG2 cells, a human hepatoblastoma cell line. Phosphorylated in vitro by host protein kinase C or mitogen-activated protein kinase. N-acetylated in insect cells.

The protein localises to the host cytoplasm. It is found in the host nucleus. The protein resides in the host mitochondrion. In terms of biological role, multifunctional protein that plays a role in silencing host antiviral defenses and promoting viral transcription. Does not seem to be essential for HBV infection. May be directly involved in development of cirrhosis and liver cancer (hepatocellular carcinoma). Most of cytosolic activities involve modulation of cytosolic calcium. The effect on apoptosis is controversial depending on the cell types in which the studies have been conducted. May induce apoptosis by localizing in mitochondria and causing loss of mitochondrial membrane potential. May also modulate apoptosis by binding host CFLAR, a key regulator of the death-inducing signaling complex (DISC). Promotes viral transcription by using the host E3 ubiquitin ligase DDB1 to target the SMC5-SMC6 complex to proteasomal degradation. This host complex would otherwise bind to viral episomal DNA, and prevents its transcription. Moderately stimulates transcription of many different viral and cellular transcription elements. Promoters and enhancers stimulated by HBx contain DNA binding sites for NF-kappa-B, AP-1, AP-2, c-EBP, ATF/CREB, or the calcium-activated factor NF-AT. This Hepatitis B virus genotype E (isolate Cote d'Ivoire/ABI-129/2003) (HBV-E) protein is Protein X.